The following is a 333-amino-acid chain: D-lactate dehydrogenase (333 aa).

NAD(+)-binding positions include 156 to 157 (HI), Asp-176, 207 to 208 (VP), Asn-213, 234 to 236 (VSR), and Asp-260. Arg-236 is a catalytic residue. Glu-265 is a catalytic residue. Catalysis depends on His-297, which acts as the Proton donor.

This sequence belongs to the D-isomer specific 2-hydroxyacid dehydrogenase family. As to quaternary structure, homodimer.

It catalyses the reaction (R)-lactate + NAD(+) = pyruvate + NADH + H(+). The protein is D-lactate dehydrogenase (ldhA) of Lactobacillus delbrueckii subsp. bulgaricus (strain ATCC 11842 / DSM 20081 / BCRC 10696 / JCM 1002 / NBRC 13953 / NCIMB 11778 / NCTC 12712 / WDCM 00102 / Lb 14).